We begin with the raw amino-acid sequence, 179 residues long: Shikimate kinase (179 aa).

Residue 15–20 (GAGKTS) participates in ATP binding. Position 19 (T19) interacts with Mg(2+). Positions 37, 61, and 83 each coordinate substrate. R123 contributes to the ATP binding site. Substrate is bound at residue R142.

Belongs to the shikimate kinase family. In terms of assembly, monomer. It depends on Mg(2+) as a cofactor.

It is found in the cytoplasm. The catalysed reaction is shikimate + ATP = 3-phosphoshikimate + ADP + H(+). It functions in the pathway metabolic intermediate biosynthesis; chorismate biosynthesis; chorismate from D-erythrose 4-phosphate and phosphoenolpyruvate: step 5/7. Catalyzes the specific phosphorylation of the 3-hydroxyl group of shikimic acid using ATP as a cosubstrate. The polypeptide is Shikimate kinase (Coxiella burnetii (strain CbuG_Q212) (Coxiella burnetii (strain Q212))).